A 138-amino-acid chain; its full sequence is Small ribosomal subunit protein uS8 (138 aa).

Belongs to the universal ribosomal protein uS8 family. In terms of assembly, part of the 30S ribosomal subunit. Contacts proteins S5 and S12.

Functionally, one of the primary rRNA binding proteins, it binds directly to 16S rRNA central domain where it helps coordinate assembly of the platform of the 30S subunit. In Thermus aquaticus, this protein is Small ribosomal subunit protein uS8.